The primary structure comprises 387 residues: Succinate--CoA ligase [ADP-forming] subunit beta (387 aa).

In terms of domain architecture, ATP-grasp spans 9-245 (KDLLESYGLK…KSQENAKELK (237 aa)). Residues K46, 53–55 (GRG), E100, Y103, and E108 each bind ATP. N200 and D214 together coordinate Mg(2+). Substrate-binding positions include N265 and 322-324 (GIV).

It belongs to the succinate/malate CoA ligase beta subunit family. In terms of assembly, heterotetramer of two alpha and two beta subunits. Requires Mg(2+) as cofactor.

It catalyses the reaction succinate + ATP + CoA = succinyl-CoA + ADP + phosphate. The enzyme catalyses GTP + succinate + CoA = succinyl-CoA + GDP + phosphate. It participates in carbohydrate metabolism; tricarboxylic acid cycle; succinate from succinyl-CoA (ligase route): step 1/1. In terms of biological role, succinyl-CoA synthetase functions in the citric acid cycle (TCA), coupling the hydrolysis of succinyl-CoA to the synthesis of either ATP or GTP and thus represents the only step of substrate-level phosphorylation in the TCA. The beta subunit provides nucleotide specificity of the enzyme and binds the substrate succinate, while the binding sites for coenzyme A and phosphate are found in the alpha subunit. In Francisella tularensis subsp. holarctica (strain FTNF002-00 / FTA), this protein is Succinate--CoA ligase [ADP-forming] subunit beta.